The chain runs to 242 residues: Protein HTATIP2 (242 aa).

The residue at position 2 (alanine 2) is an N-acetylalanine. The segment at 2–25 (AETEALSKLREDFRMQNKSVFILG) is required for interaction with elongation factor EEF1A1. NADPH-binding residues include serine 27, glycine 28, glutamate 29, threonine 30, arginine 52, arginine 53, leucine 92, glycine 93, tyrosine 143, lysine 147, leucine 170, and arginine 178. Tyrosine 143 (proton acceptor) is an active-site residue. The active site involves lysine 147.

In terms of assembly, monomer. Forms homodimers during oxidative stress. Interacts (via N-terminus) with elongation factor EEF1A1 (via middle-region); the interaction is direct and competes with EEF1A1 binding to guanyl-nucleotide exchange factor EEF1B2, thereby inhibiting GDP for GTP exchange and reactivation of EEF1A1. Interacts with nuclear transport receptors XPO4, IPO5/RANBP5, IPO7, IPO9 and KPNB1 as well as GCN1L1/GCN1 and LRPPRC probably through their HEAT repeats. Binds NCOA5/CIA.

It is found in the cytoplasm. In terms of biological role, represses translation by preventing reactivation of elongation factor eEF1A. May also inhibit nuclear import by competing with nuclear import substrates for binding to a subset of nuclear transport receptors. Has additionally been proposed to act as a redox sensor involved in cellular oxidative stress surveillance. This chain is Protein HTATIP2 (HTATIP2), found in Pongo pygmaeus (Bornean orangutan).